The primary structure comprises 440 residues: MTTIQKIYSRSIYDSRGNPTVEVELTTELGTFRSMVPSGASTGEWEAKELRDNDKNKWGGKGVTIAVHNVNNIIGPALVKSDIKITDQRGIDEFMIKLDGTNDKSKLGANSIVGVSMAVARAAAAFLKIPLYEYIGKLAGSKTTECIPVPSFNVLNGGRHAGGDLAFQEFMIMPIKAPTFSEGLRWGSEVYHTLKALAKKKYGASAGNVGDEGGIAPDLTTAEEALDLVNEAIKEAGYDGKVKIGFDVAASELYNGKLYDLDFKSEHPKPENKLDYKKLYEKYSALIEKYPIVFIEDPFSEEDWGAFSYMSSKTKVEVIADDLTVTNVKRLSKAIELKCANALLVKINQIGSLSETIDAANMAKKAGWGLMVSHRSGETDDSFIAHLAVGLEAGQMKSGAPCRSERLAKYNELLRIEDNLGDSAIYAGTRAADYIKSNTL.

Substrate-binding residues include His160 and Glu169. Glu212 acts as the Proton donor in catalysis. Residues Asp247, Glu296, and Asp321 each contribute to the Mg(2+) site. Substrate contacts are provided by Glu296 and Asp321. Catalysis depends on Lys346, which acts as the Proton acceptor. Residues 373–376 (SHRS) and Lys397 contribute to the substrate site.

This sequence belongs to the enolase family. In terms of assembly, homodimer. Requires Mg(2+) as cofactor.

It is found in the cytoplasm. The enzyme catalyses (2R)-2-phosphoglycerate = phosphoenolpyruvate + H2O. The protein operates within carbohydrate degradation; glycolysis; pyruvate from D-glyceraldehyde 3-phosphate: step 4/5. This chain is Enolase 1-2 (eno102), found in Schizosaccharomyces pombe (strain 972 / ATCC 24843) (Fission yeast).